We begin with the raw amino-acid sequence, 70 residues long: ATP synthase subunit c (70 aa).

Helical transmembrane passes span 4–24 (IAAGIAMAGAAIGGGVGDGIV) and 47–67 (FIGVGLVEAMPIIAFVVALMV).

It belongs to the ATPase C chain family. In terms of assembly, F-type ATPases have 2 components, F(1) - the catalytic core - and F(0) - the membrane proton channel. F(1) has five subunits: alpha(3), beta(3), gamma(1), delta(1), epsilon(1). F(0) has three main subunits: a(1), b(2) and c(10-14). The alpha and beta chains form an alternating ring which encloses part of the gamma chain. F(1) is attached to F(0) by a central stalk formed by the gamma and epsilon chains, while a peripheral stalk is formed by the delta and b chains.

It is found in the cell membrane. F(1)F(0) ATP synthase produces ATP from ADP in the presence of a proton or sodium gradient. F-type ATPases consist of two structural domains, F(1) containing the extramembraneous catalytic core and F(0) containing the membrane proton channel, linked together by a central stalk and a peripheral stalk. During catalysis, ATP synthesis in the catalytic domain of F(1) is coupled via a rotary mechanism of the central stalk subunits to proton translocation. Its function is as follows. Key component of the F(0) channel; it plays a direct role in translocation across the membrane. A homomeric c-ring of between 10-14 subunits forms the central stalk rotor element with the F(1) delta and epsilon subunits. In Levilactobacillus brevis (strain ATCC 367 / BCRC 12310 / CIP 105137 / JCM 1170 / LMG 11437 / NCIMB 947 / NCTC 947) (Lactobacillus brevis), this protein is ATP synthase subunit c.